Reading from the N-terminus, the 84-residue chain is RQC P-site tRNA stabilizing factor (84 aa).

An S4 RNA-binding domain is found at 1–64 (MRIDKFLQSV…IEEYTILQIP (64 aa)).

Belongs to the RqcP family. Associates with stalled 50S ribosomal subunits. Binds to RqcH, 23S rRNA and the P-site tRNA. Does not require RqcH for association with 50S subunits.

Functionally, key component of the ribosome quality control system (RQC), a ribosome-associated complex that mediates the extraction of incompletely synthesized nascent chains from stalled ribosomes and their subsequent degradation. RqcH recruits Ala-charged tRNA, and with RqcP directs the elongation of stalled nascent chains on 50S ribosomal subunits, leading to non-templated C-terminal alanine extensions (Ala tail). The Ala tail promotes nascent chain degradation. RqcP is associated with the translocation-like movement of the peptidyl-tRNA from the A-site into the P-site. This is RQC P-site tRNA stabilizing factor from Helicobacter pylori (strain J99 / ATCC 700824) (Campylobacter pylori J99).